We begin with the raw amino-acid sequence, 607 residues long: MHLNLKSLCSLTLISQAKTSNPFLSFSNCRPFSSLHSGSANLILMELLKEVAKEGSSASVGVAIRADQKSYSYKQLISSAQRICSLLCSTDLKASHKAGKQVTPALINGLSGHGHLGGARVGIVAKPSAEFVTGVLGTWLSGGVAVPLALSYPEAELLHVMTDSDISMILSTEDHQELMQKIAAKTAAQFSLIPPVPSSCSQEGAVDHLQTGDINTDSILHNTEISNENPALIVYTSGTTGKPKGVVHTHKSINAQVQTLAKAWEYTPADQFLHCLPLHHVHGLFNALFAPLYARSTVEFMPKFSVRGIWQRWRESYPTCETKVDDCITVFTGVPTMYTRLIQGYEAMDPELKEASASAAKQLRLMMCGSSALPIPVMQQWQTITGHRLLERYGMTEFVMAISNPLKGERKAGTVGKPFPGVEVRIVAEDENGSDTTGVGELCVRSPSLFKEYWRLPEVTKSSFTDDGFFKTGDAGKVDEDGYYVILGRTSADIMKVGGYKLSALEIESVLLEHPTVEECCVLGLPDKDYGEAVSAIIVPAAEAKKKGEEESKPAISLEELFSWAQHKLAPYKLPTRLFLWDSLPRNAMGKVNKKELKKKLTVEQGV.

Residues 236 to 244 (TSGTTGKPK), 391 to 396 (ERYGMT), Asp474, 486 to 489 (ILGR), and Lys591 contribute to the ATP site. Residues 305–391 (SVRGIWQRWR…QTITGHRLLE (87 aa)) form an SBD1 region. The segment at 392–453 (RYGMTEFVMA…VRSPSLFKEY (62 aa)) is SBD2.

This sequence belongs to the ATP-dependent AMP-binding enzyme family. In terms of tissue distribution, mostly expressed at low levels in glandular trichomes (lupulin glands) after flowering, and, to a lower extent, in stems, leaves, flowers and cones.

The protein localises to the cytoplasm. The protein resides in the cytosol. The protein is Probable CoA ligase CCL8 of Humulus lupulus (European hop).